The sequence spans 344 residues: tRNA N6-adenosine threonylcarbamoyltransferase (344 aa).

2 residues coordinate Fe cation: histidine 119 and histidine 123. Substrate contacts are provided by residues 141–145 (VVSGG), aspartate 174, glycine 187, aspartate 191, and asparagine 280. Aspartate 310 contributes to the Fe cation binding site.

The protein belongs to the KAE1 / TsaD family. The cofactor is Fe(2+).

Its subcellular location is the cytoplasm. The catalysed reaction is L-threonylcarbamoyladenylate + adenosine(37) in tRNA = N(6)-L-threonylcarbamoyladenosine(37) in tRNA + AMP + H(+). Its function is as follows. Required for the formation of a threonylcarbamoyl group on adenosine at position 37 (t(6)A37) in tRNAs that read codons beginning with adenine. Is involved in the transfer of the threonylcarbamoyl moiety of threonylcarbamoyl-AMP (TC-AMP) to the N6 group of A37, together with TsaE and TsaB. TsaD likely plays a direct catalytic role in this reaction. The chain is tRNA N6-adenosine threonylcarbamoyltransferase from Listeria welshimeri serovar 6b (strain ATCC 35897 / DSM 20650 / CCUG 15529 / CIP 8149 / NCTC 11857 / SLCC 5334 / V8).